Consider the following 511-residue polypeptide: MSAKSTARFTPAGQLTAEDLGAIHLIGVGGVGMSGLARLFLTRGISVSGSELREWPSLAGLRALGGTIYMSHEVANLDGVDTVVYSSAIPQDHLELVEARRRGLRVLHRSEALAAAMTGRRTVAVAGTHGKTTTTSMVTMVLQQAGVDPSFVIGGEISEVGSGAHHGTGEYFVVEADESDRSFLIYRPFVSIITNIEADHLNTYGDLANLEAAFADFARLTDPDGFVVTCADDAGSRRLAETLRAEGRRVYTYGTSTDADLRLTEMASSTRGIRYLAEVDGRSLGEFRLPVPGRHMGLNSASAVLAAYLLGLPLDAAEAALAAFPGVRRRFERKGVADNVLVYDEYAYHPTPIALALRTLREVAGDGRLIVVFQPYRLYRTRDLQTEIAEALAIADELVLLEVFGPGELREPGEGSAALIEAVPLPADRKVFVDSWEAAPVEVARRARPGDVVVTMGAPPSSLMGEQLLDALSARRAGSPVGTVPGGEVGGATTIGGTVPGGSAPGASAAG.

Position 127–133 (127–133) interacts with ATP; that stretch reads GTHGKTT. Positions 481–511 are disordered; it reads VGTVPGGEVGGATTIGGTVPGGSAPGASAAG. Residues 484–504 show a composition bias toward gly residues; it reads VPGGEVGGATTIGGTVPGGSA.

Belongs to the MurCDEF family.

The protein resides in the cytoplasm. The catalysed reaction is UDP-N-acetyl-alpha-D-muramate + L-alanine + ATP = UDP-N-acetyl-alpha-D-muramoyl-L-alanine + ADP + phosphate + H(+). It participates in cell wall biogenesis; peptidoglycan biosynthesis. Cell wall formation. The protein is UDP-N-acetylmuramate--L-alanine ligase of Salinispora arenicola (strain CNS-205).